The sequence spans 581 residues: Major facilitator superfamily multidrug transporter NAG4 (581 aa).

Over residues methionine 1–valine 14 the composition is skewed to polar residues. Residues methionine 1–serine 43 are disordered. Asparagine 11 carries an N-linked (GlcNAc...) asparagine glycan. Basic and acidic residues predominate over residues aspartate 15–glutamine 27. Residue asparagine 125 is glycosylated (N-linked (GlcNAc...) asparagine). Transmembrane regions (helical) follow at residues tryptophan 132–valine 152, valine 169–phenylalanine 189, lysine 199–alanine 219, leucine 230–isoleucine 250, alanine 261–leucine 281, tryptophan 290–valine 310, isoleucine 365–phenylalanine 385, glycine 403–phenylalanine 423, leucine 447–serine 467, tryptophan 471–leucine 491, alanine 510–isoleucine 530, and leucine 544–alanine 564.

The protein belongs to the major facilitator superfamily. DHA1 family. Polyamines/proton antiporter (TC 2.A.1.2.16) subfamily.

It localises to the cell membrane. MFS transporter involved in N-acetylglucosamine (GlcNAc) uptake. Confers resistance to cycloheximide, 4-nitroquinoline-N-oxide, and 1,10-phenanthroline, and contributes to virulence. This is Major facilitator superfamily multidrug transporter NAG4 from Candida albicans (strain SC5314 / ATCC MYA-2876) (Yeast).